The sequence spans 146 residues: Cyanate hydratase (146 aa).

Catalysis depends on residues Arg-87, Glu-90, and Ser-113.

Belongs to the cyanase family.

It carries out the reaction cyanate + hydrogencarbonate + 3 H(+) = NH4(+) + 2 CO2. Functionally, catalyzes the reaction of cyanate with bicarbonate to produce ammonia and carbon dioxide. The sequence is that of Cyanate hydratase from Pseudomonas putida (strain ATCC 700007 / DSM 6899 / JCM 31910 / BCRC 17059 / LMG 24140 / F1).